The following is a 420-amino-acid chain: Tol-Pal system protein TolB (420 aa).

Positions 1–21 (MKLFVHLVLFISLFIPYFTKA) are cleaved as a signal peptide.

This sequence belongs to the TolB family. The Tol-Pal system is composed of five core proteins: the inner membrane proteins TolA, TolQ and TolR, the periplasmic protein TolB and the outer membrane protein Pal. They form a network linking the inner and outer membranes and the peptidoglycan layer.

The protein resides in the periplasm. Part of the Tol-Pal system, which plays a role in outer membrane invagination during cell division and is important for maintaining outer membrane integrity. In Wolbachia sp. subsp. Drosophila simulans (strain wRi), this protein is Tol-Pal system protein TolB.